The primary structure comprises 181 residues: UPF0302 protein lmo1921 (181 aa).

This sequence belongs to the UPF0302 family.

The chain is UPF0302 protein lmo1921 from Listeria monocytogenes serovar 1/2a (strain ATCC BAA-679 / EGD-e).